Reading from the N-terminus, the 394-residue chain is Elongation factor Tu (394 aa).

A tr-type G domain is found at 10–204 (KPHVNVGTIG…YLDSYIPEPE (195 aa)). The segment at 19–26 (GHVDHGKT) is G1. 19–26 (GHVDHGKT) contributes to the GTP binding site. Threonine 26 contacts Mg(2+). The G2 stretch occupies residues 60 to 64 (GITIN). Residues 81-84 (DCPG) are G3. Residues 81-85 (DCPGH) and 136-139 (NKCD) contribute to the GTP site. Residues 136–139 (NKCD) are G4. A G5 region spans residues 174 to 176 (SAL).

The protein belongs to the TRAFAC class translation factor GTPase superfamily. Classic translation factor GTPase family. EF-Tu/EF-1A subfamily. As to quaternary structure, monomer.

Its subcellular location is the cytoplasm. It catalyses the reaction GTP + H2O = GDP + phosphate + H(+). In terms of biological role, GTP hydrolase that promotes the GTP-dependent binding of aminoacyl-tRNA to the A-site of ribosomes during protein biosynthesis. The polypeptide is Elongation factor Tu (Enterobacter sp. (strain 638)).